The following is a 104-amino-acid chain: Pyrimidine/purine nucleoside phosphorylase (104 aa).

The protein belongs to the nucleoside phosphorylase PpnP family.

The catalysed reaction is a purine D-ribonucleoside + phosphate = a purine nucleobase + alpha-D-ribose 1-phosphate. It carries out the reaction adenosine + phosphate = alpha-D-ribose 1-phosphate + adenine. It catalyses the reaction cytidine + phosphate = cytosine + alpha-D-ribose 1-phosphate. The enzyme catalyses guanosine + phosphate = alpha-D-ribose 1-phosphate + guanine. The catalysed reaction is inosine + phosphate = alpha-D-ribose 1-phosphate + hypoxanthine. It carries out the reaction thymidine + phosphate = 2-deoxy-alpha-D-ribose 1-phosphate + thymine. It catalyses the reaction uridine + phosphate = alpha-D-ribose 1-phosphate + uracil. The enzyme catalyses xanthosine + phosphate = alpha-D-ribose 1-phosphate + xanthine. Catalyzes the phosphorolysis of diverse nucleosides, yielding D-ribose 1-phosphate and the respective free bases. Can use uridine, adenosine, guanosine, cytidine, thymidine, inosine and xanthosine as substrates. Also catalyzes the reverse reactions. This chain is Pyrimidine/purine nucleoside phosphorylase, found in Leptothrix cholodnii (strain ATCC 51168 / LMG 8142 / SP-6) (Leptothrix discophora (strain SP-6)).